A 647-amino-acid polypeptide reads, in one-letter code: Versicolorin B synthase (647 aa).

An N-terminal signal peptide occupies residues 1–26 (MALSTILTAAAMPVAGLFAFAQQSSA). FAD contacts are provided by residues 85-86 (TA) and 106-107 (EA). An N-linked (GlcNAc...) asparagine glycan is attached at asparagine 117. 172-175 (GAML) serves as a coordination point for FAD. N-linked (GlcNAc...) asparagine glycans are attached at residues asparagine 222 and asparagine 509. FAD-binding positions include alanine 617 and 628-629 (PM).

Belongs to the GMC oxidoreductase family. In terms of assembly, homodimer. Requires FAD as cofactor.

Its subcellular location is the cytoplasm. The protein localises to the cytosol. The enzyme catalyses (2S-3S)-versiconal hemiacetal = versicolorin B + H2O. It carries out the reaction (S)-5'-oxoaverantin + H(+) = (1'S,5'S)-averufin + H2O. It participates in mycotoxin biosynthesis. Versicolorin B synthase; part of the fragmented gene cluster that mediates the biosynthesis of dothistromin (DOTH), a polyketide toxin very similar in structure to the aflatoxin precursor, versicolorin B. The first step of the pathway is the conversion of acetate to norsolorinic acid (NOR) and requires the fatty acid synthase subunits hexA and hexB, as well as the polyketide synthase pksA. PksA combines a hexanoyl starter unit and 7 malonyl-CoA extender units to synthesize the precursor NOR. The hexanoyl starter unit is provided to the acyl-carrier protein (ACP) domain by the fungal fatty acid synthase hexA/hexB. The second step is the conversion of NOR to averantin (AVN) and requires the norsolorinic acid ketoreductase nor1, which catalyzes the dehydration of norsolorinic acid to form (1'S)-averantin. The cytochrome P450 monooxygenase avnA then catalyzes the hydroxylation of AVN to 5'hydroxyaverantin (HAVN). The next step is performed by adhA that transforms HAVN to averufin (AVF). Averufin might then be converted to hydroxyversicolorone by cypX and avfA. Hydroxyversicolorone is further converted versiconal hemiacetal acetate (VHA) by moxY. VHA is then the substrate for the versiconal hemiacetal acetate esterase est1 to yield versiconal (VAL). Versicolorin B synthase vbsA then converts VAL to versicolorin B (VERB) by closing the bisfuran ring. Then, the activity of the versicolorin B desaturase verB leads to versicolorin A (VERA). DotB, a predicted chloroperoxidase, may perform epoxidation of the A-ring of VERA. Alternatively, a cytochrome P450, such as cypX or avnA could catalyze this step. It is also possible that another, uncharacterized, cytochrome P450 enzyme is responsible for this step. Opening of the epoxide could potentially be achieved by the epoxide hydrolase epoA. However, epoA seems not to be required for DOTH biosynthesis, but other epoxide hydrolases may have the ability to complement this hydrolysis. Alternatively, opening of the epoxide ring could be achieved non-enzymatically. The next step is the deoxygenation of ring A to yield the 5,8-dihydroxyanthraquinone which is most likely catalyzed by the NADPH dehydrogenase encoded by ver1. The last stages of DOTH biosynthesis are proposed to involve hydroxylation of the bisfuran. OrdB and norB might have oxidative roles here. An alternative possibility is that cytochrome P450 monoogenases such as avnA and cypX might perform these steps in addition to previously proposed steps. The sequence is that of Versicolorin B synthase from Dothistroma septosporum (Red band needle blight fungus).